The primary structure comprises 232 residues: 2-C-methyl-D-erythritol 4-phosphate cytidylyltransferase (232 aa).

Belongs to the IspD/TarI cytidylyltransferase family. IspD subfamily.

It catalyses the reaction 2-C-methyl-D-erythritol 4-phosphate + CTP + H(+) = 4-CDP-2-C-methyl-D-erythritol + diphosphate. It functions in the pathway isoprenoid biosynthesis; isopentenyl diphosphate biosynthesis via DXP pathway; isopentenyl diphosphate from 1-deoxy-D-xylulose 5-phosphate: step 2/6. In terms of biological role, catalyzes the formation of 4-diphosphocytidyl-2-C-methyl-D-erythritol from CTP and 2-C-methyl-D-erythritol 4-phosphate (MEP). The polypeptide is 2-C-methyl-D-erythritol 4-phosphate cytidylyltransferase (Synechococcus elongatus (strain ATCC 33912 / PCC 7942 / FACHB-805) (Anacystis nidulans R2)).